A 420-amino-acid chain; its full sequence is Histidine--tRNA ligase (420 aa).

This sequence belongs to the class-II aminoacyl-tRNA synthetase family. Homodimer.

It localises to the cytoplasm. The catalysed reaction is tRNA(His) + L-histidine + ATP = L-histidyl-tRNA(His) + AMP + diphosphate + H(+). The chain is Histidine--tRNA ligase from Staphylococcus aureus (strain Mu3 / ATCC 700698).